The following is a 91-amino-acid chain: Large ribosomal subunit protein bL27 (91 aa).

The protein belongs to the bacterial ribosomal protein bL27 family.

In Pseudomonas savastanoi pv. phaseolicola (strain 1448A / Race 6) (Pseudomonas syringae pv. phaseolicola (strain 1448A / Race 6)), this protein is Large ribosomal subunit protein bL27.